The following is a 166-amino-acid chain: Lipoprotein signal peptidase (166 aa).

A run of 3 helical transmembrane segments spans residues 12 to 32 (WLWLVVVVLIIDLGSKYLILQ), 70 to 90 (WFFAGIAIGICVILLVMMYRS), and 102 to 122 (ALIIGGALGNLFDRLWHGFVV). Active-site residues include D123 and D141. A helical transmembrane segment spans residues 137 to 157 (FNLADSAICIGAALIVLEGFL).

Belongs to the peptidase A8 family.

It localises to the cell inner membrane. It catalyses the reaction Release of signal peptides from bacterial membrane prolipoproteins. Hydrolyzes -Xaa-Yaa-Zaa-|-(S,diacylglyceryl)Cys-, in which Xaa is hydrophobic (preferably Leu), and Yaa (Ala or Ser) and Zaa (Gly or Ala) have small, neutral side chains.. Its pathway is protein modification; lipoprotein biosynthesis (signal peptide cleavage). In terms of biological role, this protein specifically catalyzes the removal of signal peptides from prolipoproteins. The polypeptide is Lipoprotein signal peptidase (Salmonella agona (strain SL483)).